Reading from the N-terminus, the 312-residue chain is Ribosomal protein L11 methyltransferase (312 aa).

S-adenosyl-L-methionine is bound by residues Thr-162, Gly-183, Asp-205, and Asn-248.

This sequence belongs to the methyltransferase superfamily. PrmA family.

The protein localises to the cytoplasm. It catalyses the reaction L-lysyl-[protein] + 3 S-adenosyl-L-methionine = N(6),N(6),N(6)-trimethyl-L-lysyl-[protein] + 3 S-adenosyl-L-homocysteine + 3 H(+). Functionally, methylates ribosomal protein L11. The polypeptide is Ribosomal protein L11 methyltransferase (Bacillus cereus (strain Q1)).